The following is an 855-amino-acid chain: Glucans biosynthesis glucosyltransferase H (855 aa).

The next 6 helical transmembrane spans lie at 142–162 (ILLT…KGIL), 196–216 (ILVL…TALM), 515–535 (VFLT…FLVL), 572–592 (LFST…ILIW), 606–626 (TLSM…RMIF), and 682–702 (FLWW…VSVI).

This sequence belongs to the glycosyltransferase 2 family. OpgH subfamily.

Its subcellular location is the cell inner membrane. It functions in the pathway glycan metabolism; osmoregulated periplasmic glucan (OPG) biosynthesis. Involved in the biosynthesis of osmoregulated periplasmic glucans (OPGs). This Pseudomonas entomophila (strain L48) protein is Glucans biosynthesis glucosyltransferase H.